A 557-amino-acid polypeptide reads, in one-letter code: Urease subunit alpha (557 aa).

One can recognise a Urease domain in the interval 130 to 557; the sequence is GFIDTHIHWV…LPLTQLYFIY (428 aa). Ni(2+)-binding residues include His135, His137, and Lys217. Lys217 is subject to N6-carboxylysine. His219 contributes to the substrate binding site. Residues His246 and His272 each contribute to the Ni(2+) site. Residue His320 is the Proton donor of the active site. Asp360 is a Ni(2+) binding site.

Belongs to the metallo-dependent hydrolases superfamily. Urease alpha subunit family. Heterohexamer of 3 UreC (alpha) and 3 UreAB (gamma/beta) subunits. It depends on Ni cation as a cofactor. In terms of processing, carboxylation allows a single lysine to coordinate two nickel ions.

It localises to the cytoplasm. It catalyses the reaction urea + 2 H2O + H(+) = hydrogencarbonate + 2 NH4(+). It functions in the pathway nitrogen metabolism; urea degradation; CO(2) and NH(3) from urea (urease route): step 1/1. This is Urease subunit alpha from Sulfurisphaera tokodaii (strain DSM 16993 / JCM 10545 / NBRC 100140 / 7) (Sulfolobus tokodaii).